A 312-amino-acid polypeptide reads, in one-letter code: Olfactory receptor 2B8 (312 aa).

At 1–25 (MDQKNGSSFTGFILLGFSDRPQLEL) the chain is on the extracellular side. N5 carries an N-linked (GlcNAc...) asparagine glycan. A helical membrane pass occupies residues 26–49 (VLFVVLLIFYIFTLLGNKTIIVLS). Over 50–57 (HLDPHLHT) the chain is Cytoplasmic. A helical membrane pass occupies residues 58 to 79 (PMYFFFSNLSFLDLCYTTGIVP). Over 80–100 (QLLVNLRGADKSISYGGCVVQ) the chain is Extracellular. C97 and C189 form a disulfide bridge. A helical transmembrane segment spans residues 101-120 (LYISLGLGSTECVLLGVMVF). Over 121–139 (DRYAAVCRPLHYTVVMHPC) the chain is Cytoplasmic. Residues 140-158 (LYVLMASTSWVIGFANSLL) form a helical membrane-spanning segment. Residues 159-195 (QTVLILLLTLCGRNKLEHFLCEVPPLLKLACVDTTMN) lie on the Extracellular side of the membrane. N195 is a glycosylation site (N-linked (GlcNAc...) asparagine). The chain crosses the membrane as a helical span at residues 196-219 (ESELFFVSVIILLVPVALIIFSYS). Topologically, residues 220 to 236 (QIVRAVMRIKLATGQRK) are cytoplasmic. A helical transmembrane segment spans residues 237–259 (VFGTCGSHLTVVSLFYGTAIYAY). Residues 260-272 (LQPGNNYSQDQGK) lie on the Extracellular side of the membrane. An N-linked (GlcNAc...) asparagine glycan is attached at N265. Residues 273-292 (FISLFYTIITPMINPLIYTL) form a helical membrane-spanning segment. Residues 293–312 (RNKDVKGALKKVLWKNYDSR) are Cytoplasmic-facing.

This sequence belongs to the G-protein coupled receptor 1 family.

It localises to the cell membrane. In terms of biological role, odorant receptor. This Homo sapiens (Human) protein is Olfactory receptor 2B8.